The following is a 956-amino-acid chain: Nitrogen regulatory protein NUT1 (956 aa).

A compositionally biased stretch (basic and acidic residues) spans 1 to 12; it reads MNPTITEHDFRF. Disordered regions lie at residues 1-51, 120-222, 240-262, 348-373, and 524-661; these read MNPT…NDAQ, QQEE…PAAA, KTSI…FQVP, GQSI…SQVS, and TLPG…DAPT. Over residues 15 to 37 the composition is skewed to low complexity; it reads RPAAPGRDPGSDSSDDPLPASLR. 4 stretches are compositionally biased toward polar residues: residues 42–51, 131–153, 167–194, and 208–217; these read DRQSAFNDAQ, PLKT…QKKS, SHGS…NAIS, and AAQSQFNPQS. The span at 588–613 shows a compositional bias: polar residues; the sequence is NASTTAIPNSQMQYEQQGVQGHTNSP. Composition is skewed to low complexity over residues 623 to 633 and 640 to 661; these read SGFSSVVHSRP and SKNG…DAPT. Residues 663–687 form a GATA-type zinc finger; that stretch reads CTNCATQTTPLWRRNPEGQPLCNAC. Residues 708 to 890 form a disordered region; that stretch reads KKRNRGSGSN…AATRPSGFGT (183 aa). Positions 713-760 are enriched in polar residues; sequence GSGSNVPGATSGSRSKKGATSTAVSGTNTRKNSSLAISRTASTTNVQV. Residues 812–839 show a composition bias toward low complexity; the sequence is VVPIAAAPPKNMPGPGAAAAARTVALGP. 2 stretches are compositionally biased toward polar residues: residues 849 to 863 and 872 to 881; these read SPAN…NANH and PENSTGSNEA.

It localises to the nucleus. Functionally, major nitrogen regulatory protein; activates expression of nitrogen-regulated genes. The polypeptide is Nitrogen regulatory protein NUT1 (NUT1) (Pyricularia oryzae (strain 70-15 / ATCC MYA-4617 / FGSC 8958) (Rice blast fungus)).